A 311-amino-acid chain; its full sequence is HPr kinase/phosphorylase (311 aa).

Residues H138 and K159 contribute to the active site. 153–160 (GKSGVGKS) serves as a coordination point for ATP. S160 is a binding site for Mg(2+). The Proton acceptor; for phosphorylation activity. Proton donor; for dephosphorylation activity role is filled by D177. The segment at 201–210 (LEIRGLGIIN) is important for the catalytic mechanism of both phosphorylation and dephosphorylation. E202 contacts Mg(2+). The active site involves R243. Residues 264–269 (PVRPGR) are important for the catalytic mechanism of dephosphorylation.

It belongs to the HPrK/P family. In terms of assembly, homohexamer. The cofactor is Mg(2+).

The catalysed reaction is [HPr protein]-L-serine + ATP = [HPr protein]-O-phospho-L-serine + ADP + H(+). It carries out the reaction [HPr protein]-O-phospho-L-serine + phosphate + H(+) = [HPr protein]-L-serine + diphosphate. Its function is as follows. Catalyzes the ATP- as well as the pyrophosphate-dependent phosphorylation of a specific serine residue in HPr, a phosphocarrier protein of the phosphoenolpyruvate-dependent sugar phosphotransferase system (PTS). HprK/P also catalyzes the pyrophosphate-producing, inorganic phosphate-dependent dephosphorylation (phosphorolysis) of seryl-phosphorylated HPr (P-Ser-HPr). The two antagonistic activities of HprK/P are regulated by several intracellular metabolites, which change their concentration in response to the absence or presence of rapidly metabolisable carbon sources (glucose, fructose, etc.) in the growth medium. Also phosphorylates/dephosphorylates the HPr-like catabolite repression protein crh on a specific serine residue. Therefore, by controlling the phosphorylation state of HPr and crh, HPrK/P is a sensor enzyme that plays a major role in the regulation of carbon metabolism and sugar transport: it mediates carbon catabolite repression (CCR), and regulates PTS-catalyzed carbohydrate uptake and inducer exclusion. The polypeptide is HPr kinase/phosphorylase (Geobacillus kaustophilus (strain HTA426)).